A 138-amino-acid polypeptide reads, in one-letter code: Histone H2B.3 (138 aa).

Basic and acidic residues-rich tracts occupy residues 1 to 18 and 26 to 38; these read MAPK…EKTT and EKRP…GGDK. A disordered region spans residues 1 to 46; sequence MAPKAEKKPVAEKAEKTTAAKKTKAEKRPPASKEGGDKKGKKKSKK. N6-acetyllysine occurs at positions 7 and 27. A Glycyl lysine isopeptide (Lys-Gly) (interchain with G-Cter in ubiquitin) cross-link involves residue Lys-134.

This sequence belongs to the histone H2B family. The nucleosome is a histone octamer containing two molecules each of H2A, H2B, H3 and H4 assembled in one H3-H4 heterotetramer and two H2A-H2B heterodimers. The octamer wraps approximately 147 bp of DNA. Can be acetylated to form H2BK6ac and H2BK33ac. In terms of processing, monoubiquitinated to form H2BK143ub1; may give a specific tag for epigenetic transcriptional activation.

It is found in the nucleus. The protein resides in the chromosome. Core component of nucleosome. Nucleosomes wrap and compact DNA into chromatin, limiting DNA accessibility to the cellular machineries which require DNA as a template. Histones thereby play a central role in transcription regulation, DNA repair, DNA replication and chromosomal stability. DNA accessibility is regulated via a complex set of post-translational modifications of histones, also called histone code, and nucleosome remodeling. The chain is Histone H2B.3 from Triticum aestivum (Wheat).